We begin with the raw amino-acid sequence, 98 residues long: Class II hydrophobin 5 (98 aa).

The signal sequence occupies residues 1 to 17 (MQFSLALVTLLATAVSA). 4 cysteine pairs are disulfide-bonded: cysteine 30–cysteine 78, cysteine 39–cysteine 69, cysteine 40–cysteine 52, and cysteine 79–cysteine 90.

Belongs to the cerato-ulmin hydrophobin family.

It is found in the secreted. The protein localises to the cell wall. Functionally, aerial growth, conidiation, and dispersal of filamentous fungi in the environment rely upon a capability of their secreting small amphipathic proteins called hydrophobins (HPBs) with low sequence identity. Class I can self-assemble into an outermost layer of rodlet bundles on aerial cell surfaces, conferring cellular hydrophobicity that supports fungal growth, development and dispersal; whereas Class II form highly ordered films at water-air interfaces through intermolecular interactions but contribute nothing to the rodlet structure. Does not seem to be important for the ability to cause seedling disease. This chain is Class II hydrophobin 5, found in Gibberella moniliformis (Maize ear and stalk rot fungus).